A 121-amino-acid polypeptide reads, in one-letter code: Small ribosomal subunit protein uS13 (121 aa).

The interval G99 to K121 is disordered. Basic residues predominate over residues Q100–K121.

This sequence belongs to the universal ribosomal protein uS13 family. As to quaternary structure, part of the 30S ribosomal subunit. Forms a loose heterodimer with protein S19. Forms two bridges to the 50S subunit in the 70S ribosome.

In terms of biological role, located at the top of the head of the 30S subunit, it contacts several helices of the 16S rRNA. In the 70S ribosome it contacts the 23S rRNA (bridge B1a) and protein L5 of the 50S subunit (bridge B1b), connecting the 2 subunits; these bridges are implicated in subunit movement. Contacts the tRNAs in the A and P-sites. In Synechococcus sp. (strain RCC307), this protein is Small ribosomal subunit protein uS13.